The primary structure comprises 321 residues: Probable nucleosome assembly protein (321 aa).

Positions 272–298 (EENDYDFGEDFEDEEGEDDDEEDDEEE) are enriched in acidic residues. The disordered stretch occupies residues 272–321 (EENDYDFGEDFEDEEGEDDDEEDDEEEQTIKKPSGKGKAQPQQPQDCKQQ). Positions 311–321 (QPQQPQDCKQQ) are enriched in low complexity.

The protein belongs to the nucleosome assembly protein (NAP) family.

It is found in the nucleus. Functionally, may modulate chromatin structure by regulation of histone octamer formation. In Dictyostelium discoideum (Social amoeba), this protein is Probable nucleosome assembly protein (nap1).